Consider the following 424-residue polypeptide: uncharacterized protein (424 aa).

The residue at position 259 (Lys-259) is an N6-(pyridoxal phosphate)lysine.

This sequence belongs to the class-III pyridoxal-phosphate-dependent aminotransferase family. Pyridoxal 5'-phosphate serves as cofactor.

This is an uncharacterized protein from Archaeoglobus fulgidus (strain ATCC 49558 / DSM 4304 / JCM 9628 / NBRC 100126 / VC-16).